A 428-amino-acid polypeptide reads, in one-letter code: Trigger factor (428 aa).

One can recognise a PPIase FKBP-type domain in the interval 166-250 (GDIVTFDFKG…IKNIKEKILP (85 aa)).

It belongs to the FKBP-type PPIase family. Tig subfamily.

The protein localises to the cytoplasm. It carries out the reaction [protein]-peptidylproline (omega=180) = [protein]-peptidylproline (omega=0). Functionally, involved in protein export. Acts as a chaperone by maintaining the newly synthesized protein in an open conformation. Functions as a peptidyl-prolyl cis-trans isomerase. This chain is Trigger factor, found in Mycoplasma mycoides subsp. mycoides SC (strain CCUG 32753 / NCTC 10114 / PG1).